Consider the following 284-residue polypeptide: MELWYTEQHTENVRFSIKVEKEIHTEKTEFQRIDVLEAKEFGRFFTLDGLMMVTEKDEFIYHDMIVHVPMATNPNIKNVLVIGAGDGGTIRELTRYSTVEKIDMVEIDKRVVDICREYFPLTSCKLDDKRVNVFYEDGLKFIRDKEDEYDLIIVDSTDPFGPGEGLFTKEFYGNCYKALREDGILVNQHESPYYDNDAAAMKEAHEKITKFFPIIRVYQAHIPTYPSGHWLFGFASKKYHPIKDFDAEAWNKLGIKTKYYNTDLHVGCFALPTYVRDMLNGLTD.

A PABS domain is found at 2–237 (ELWYTEQHTE…GHWLFGFASK (236 aa)). S-methyl-5'-thioadenosine is bound at residue Gln31. Residues His62 and Asp86 each coordinate spermidine. S-methyl-5'-thioadenosine contacts are provided by residues Glu106 and 137 to 138 (DG). The Proton acceptor role is filled by Asp155. Spermidine is bound at residue 155-158 (DSTD). Pro162 provides a ligand contact to S-methyl-5'-thioadenosine.

Belongs to the spermidine/spermine synthase family. Homodimer or homotetramer.

It localises to the cytoplasm. The enzyme catalyses S-adenosyl 3-(methylsulfanyl)propylamine + putrescine = S-methyl-5'-thioadenosine + spermidine + H(+). It functions in the pathway amine and polyamine biosynthesis; spermidine biosynthesis; spermidine from putrescine: step 1/1. Its function is as follows. Catalyzes the irreversible transfer of a propylamine group from the amino donor S-adenosylmethioninamine (decarboxy-AdoMet) to putrescine (1,4-diaminobutane) to yield spermidine. This Clostridium beijerinckii (strain ATCC 51743 / NCIMB 8052) (Clostridium acetobutylicum) protein is Polyamine aminopropyltransferase.